The following is a 1034-amino-acid chain: Beta-galactosidase (1034 aa).

Residue E481 is the Proton donor of the active site. Catalysis depends on E547, which acts as the Nucleophile.

Belongs to the glycosyl hydrolase 2 family.

It catalyses the reaction Hydrolysis of terminal non-reducing beta-D-galactose residues in beta-D-galactosides.. The protein is Beta-galactosidase (bgaM) of Priestia megaterium (strain DSM 319 / IMG 1521) (Bacillus megaterium).